A 20-amino-acid chain; its full sequence is Non-secretory ribonuclease (20 aa).

The active-site Proton acceptor is the His-16.

The protein belongs to the pancreatic ribonuclease family. Interacts with and forms a tight 1:1 complex with RNH1. Dimerization of two such complexes may occur.

It localises to the lysosome. It is found in the cytoplasmic granule. The enzyme catalyses an [RNA] containing cytidine + H2O = an [RNA]-3'-cytidine-3'-phosphate + a 5'-hydroxy-ribonucleotide-3'-[RNA].. It catalyses the reaction an [RNA] containing uridine + H2O = an [RNA]-3'-uridine-3'-phosphate + a 5'-hydroxy-ribonucleotide-3'-[RNA].. This is a non-secretory ribonuclease. It is a pyrimidine specific nuclease with a slight preference for U. Cytotoxin and helminthotoxin. Possesses a wide variety of biological activities. The sequence is that of Non-secretory ribonuclease (RNASE2) from Sus scrofa (Pig).